Consider the following 345-residue polypeptide: Adenosine kinase 2 (345 aa).

Residue aspartate 300 is part of the active site.

Belongs to the carbohydrate kinase PfkB family. As to quaternary structure, interacts with the begomovirus AL2 protein and the curtovirus L2 protein. Interacts with KIN11. Mg(2+) is required as a cofactor. In terms of processing, phosphorylated by KIN11. In terms of tissue distribution, widely expressed.

The protein localises to the cytoplasm. It carries out the reaction adenosine + ATP = AMP + ADP + H(+). It participates in purine metabolism; AMP biosynthesis via salvage pathway; AMP from adenosine: step 1/1. Its activity is regulated as follows. Inactivated by the begomovirus AL2 protein or the curtovirus L2 protein. Its function is as follows. ATP dependent phosphorylation of adenosine and other related nucleoside analogs to monophosphate derivatives. Essential to sustain methyl recycling. This chain is Adenosine kinase 2, found in Arabidopsis thaliana (Mouse-ear cress).